We begin with the raw amino-acid sequence, 502 residues long: Probable cytosol aminopeptidase (502 aa).

Mn(2+) is bound by residues Lys-269 and Asp-274. Lys-281 is an active-site residue. The Mn(2+) site is built by Asp-292, Asp-351, and Glu-353. Arg-355 is a catalytic residue.

It belongs to the peptidase M17 family. The cofactor is Mn(2+).

The protein localises to the cytoplasm. It catalyses the reaction Release of an N-terminal amino acid, Xaa-|-Yaa-, in which Xaa is preferably Leu, but may be other amino acids including Pro although not Arg or Lys, and Yaa may be Pro. Amino acid amides and methyl esters are also readily hydrolyzed, but rates on arylamides are exceedingly low.. It carries out the reaction Release of an N-terminal amino acid, preferentially leucine, but not glutamic or aspartic acids.. Its function is as follows. Presumably involved in the processing and regular turnover of intracellular proteins. Catalyzes the removal of unsubstituted N-terminal amino acids from various peptides. The protein is Probable cytosol aminopeptidase of Shewanella piezotolerans (strain WP3 / JCM 13877).